The chain runs to 66 residues: UPF0337 protein SpyM3_0896 (66 aa).

It belongs to the UPF0337 (CsbD) family.

The polypeptide is UPF0337 protein SpyM3_0896 (Streptococcus pyogenes serotype M3 (strain ATCC BAA-595 / MGAS315)).